Here is a 130-residue protein sequence, read N- to C-terminus: MIILCFDYGIKIIGIAIAETKLNYSTPIKSIFNNKKKNFWNQINIIINMWKPKYIVIGYPYKIKKKINKKIKKFAKEIKKKFKINFFLCDENYSTTEALLFLKEKKKKKKYCLHSISAKIILDSWIRKNI.

Belongs to the YqgF nuclease family.

The protein resides in the cytoplasm. Functionally, could be a nuclease involved in processing of the 5'-end of pre-16S rRNA. The protein is Putative pre-16S rRNA nuclease of Buchnera aphidicola subsp. Cinara cedri (strain Cc).